The sequence spans 118 residues: Basic phospholipase A2 2 (118 aa).

Intrachain disulfides connect C11-C71, C27-C117, C29-C45, C44-C98, C51-C91, C60-C84, and C78-C89. Residues Y28, G30, and G32 each contribute to the Ca(2+) site. Residue H48 is part of the active site. Position 49 (D49) interacts with Ca(2+). D92 is an active-site residue.

Belongs to the phospholipase A2 family. Group I subfamily. D49 sub-subfamily. The cofactor is Ca(2+). As to expression, expressed by the venom gland.

The protein localises to the secreted. The enzyme catalyses a 1,2-diacyl-sn-glycero-3-phosphocholine + H2O = a 1-acyl-sn-glycero-3-phosphocholine + a fatty acid + H(+). Its function is as follows. Snake venom phospholipase A2 (PLA2) that inhibits neuromuscular transmission by blocking acetylcholine release from the nerve termini. PLA2 catalyzes the calcium-dependent hydrolysis of the 2-acyl groups in 3-sn-phosphoglycerides. This is Basic phospholipase A2 2 from Laticauda colubrina (Yellow-lipped sea krait).